The sequence spans 508 residues: Light-independent protochlorophyllide reductase subunit B (508 aa).

D36 is a binding site for [4Fe-4S] cluster. The Proton donor role is filled by D294. 429 to 430 contributes to the substrate binding site; that stretch reads GM.

The protein belongs to the ChlB/BchB/BchZ family. Protochlorophyllide reductase is composed of three subunits; ChlL, ChlN and ChlB. Forms a heterotetramer of two ChlB and two ChlN subunits. It depends on [4Fe-4S] cluster as a cofactor.

It catalyses the reaction chlorophyllide a + oxidized 2[4Fe-4S]-[ferredoxin] + 2 ADP + 2 phosphate = protochlorophyllide a + reduced 2[4Fe-4S]-[ferredoxin] + 2 ATP + 2 H2O. It functions in the pathway porphyrin-containing compound metabolism; chlorophyll biosynthesis (light-independent). Component of the dark-operative protochlorophyllide reductase (DPOR) that uses Mg-ATP and reduced ferredoxin to reduce ring D of protochlorophyllide (Pchlide) to form chlorophyllide a (Chlide). This reaction is light-independent. The NB-protein (ChlN-ChlB) is the catalytic component of the complex. The protein is Light-independent protochlorophyllide reductase subunit B of Thermosynechococcus vestitus (strain NIES-2133 / IAM M-273 / BP-1).